The following is a 325-amino-acid chain: Phospho-N-acetylmuramoyl-pentapeptide-transferase (325 aa).

The next 10 helical transmembrane spans lie at 5 to 25, 57 to 77, 81 to 101, 117 to 137, 146 to 166, 178 to 198, 200 to 220, 227 to 247, 252 to 272, and 304 to 324; these read VLLLTLILSFVITVILSPIFI, LMILLSILVSSLFVSFQLSIF, VLLLLLVTIGFGVLGFIDDFI, LIGQLVVAVLFYLGLRNMGLS, SLSIDFGWFYLPLVIVMLVGA, GLVAGTGAIAFGAFAIIAWAT, YFEVAIFSAAVVGAVLGFLVF, VFMGDTGSLALGGAIAAIAIM, ILLIIIGGVFVIETLSVIIQV, and VTFWTVGLLFAMLAIYLEVWI.

Belongs to the glycosyltransferase 4 family. MraY subfamily. It depends on Mg(2+) as a cofactor.

The protein resides in the cell membrane. The catalysed reaction is UDP-N-acetyl-alpha-D-muramoyl-L-alanyl-gamma-D-glutamyl-meso-2,6-diaminopimeloyl-D-alanyl-D-alanine + di-trans,octa-cis-undecaprenyl phosphate = di-trans,octa-cis-undecaprenyl diphospho-N-acetyl-alpha-D-muramoyl-L-alanyl-D-glutamyl-meso-2,6-diaminopimeloyl-D-alanyl-D-alanine + UMP. The protein operates within cell wall biogenesis; peptidoglycan biosynthesis. Its function is as follows. Catalyzes the initial step of the lipid cycle reactions in the biosynthesis of the cell wall peptidoglycan: transfers peptidoglycan precursor phospho-MurNAc-pentapeptide from UDP-MurNAc-pentapeptide onto the lipid carrier undecaprenyl phosphate, yielding undecaprenyl-pyrophosphoryl-MurNAc-pentapeptide, known as lipid I. The protein is Phospho-N-acetylmuramoyl-pentapeptide-transferase of Halalkalibacterium halodurans (strain ATCC BAA-125 / DSM 18197 / FERM 7344 / JCM 9153 / C-125) (Bacillus halodurans).